Consider the following 250-residue polypeptide: tRNA (guanine-N(1)-)-methyltransferase (250 aa).

S-adenosyl-L-methionine-binding positions include glycine 115 and leucine 135 to leucine 140.

This sequence belongs to the RNA methyltransferase TrmD family. In terms of assembly, homodimer.

It localises to the cytoplasm. It catalyses the reaction guanosine(37) in tRNA + S-adenosyl-L-methionine = N(1)-methylguanosine(37) in tRNA + S-adenosyl-L-homocysteine + H(+). Its function is as follows. Specifically methylates guanosine-37 in various tRNAs. This chain is tRNA (guanine-N(1)-)-methyltransferase, found in Legionella pneumophila (strain Paris).